A 344-amino-acid chain; its full sequence is Fe-S cluster assembly protein DRE2 (344 aa).

Residues 1–160 (MTSNILLLLH…KKLNNDNAST (160 aa)) are N-terminal SAM-like domain. Residues 154–179 (NNDNASTPGLTDSSAGTSEDETATVS) are disordered. The span at 155-170 (NDNASTPGLTDSSAGT) shows a compositional bias: polar residues. The linker stretch occupies residues 161–223 (PGLTDSSAGT…NDLIAESNKY (63 aa)). [2Fe-2S] cluster-binding residues include C231, C243, C246, and C248. The segment at 231–248 (CELPNGKKRKKACKDCTC) is fe-S binding site A. Residues C313, C316, C324, and C327 each coordinate [4Fe-4S] cluster. 2 short sequence motifs (cx2C motif) span residues 313–316 (CGSC) and 324–327 (CDGC). Positions 313–327 (CGSCSLGDAFRCDGC) are fe-S binding site B.

This sequence belongs to the anamorsin family. In terms of assembly, monomer. Interacts with TAH18. Interacts with MIA40. It depends on [2Fe-2S] cluster as a cofactor. The cofactor is [4Fe-4S] cluster.

It is found in the cytoplasm. Its subcellular location is the mitochondrion intermembrane space. In terms of biological role, component of the cytosolic iron-sulfur (Fe-S) protein assembly (CIA) machinery required for the maturation of extramitochondrial Fe-S proteins. Part of an electron transfer chain functioning in an early step of cytosolic Fe-S biogenesis, facilitating the de novo assembly of a [4Fe-4S] cluster on the scaffold complex CFD1-NBP35. Electrons are transferred to DRE2 from NADPH via the FAD- and FMN-containing protein TAH18. TAH18-DRE2 are also required for the assembly of the diferric tyrosyl radical cofactor of ribonucleotide reductase (RNR), probably by providing electrons for reduction during radical cofactor maturation in the catalytic small subunit RNR2. The polypeptide is Fe-S cluster assembly protein DRE2 (Candida tropicalis (strain ATCC MYA-3404 / T1) (Yeast)).